Here is a 750-residue protein sequence, read N- to C-terminus: Protein O-mannosyl-transferase 2 (750 aa).

The interval 1-23 (MPPATGGGLAESELRPRRGRCGP) is disordered. Serine 41 is subject to Phosphoserine. The chain crosses the membrane as a helical span at residues 54 to 74 (AVGWWALLALVTLLSFATRFH). N-linked (GlcNAc...) asparagine glycosylation occurs at asparagine 98. Helical transmembrane passes span 100-120 (TFFFDVHPPLGKMLIGLAGYL), 146-166 (GFCAFLGSWLVPFAYLTVLDL), 191-211 (QYILLDPILMFFIMAAMLSMV), 231-251 (LTGVSLAGALGVKFVGLFIIL), and 283-303 (VLCLIVLPLALYTATFAVHFM). Asparagine 330 carries N-linked (GlcNAc...) asparagine glycosylation. MIR domains follow at residues 334–390 (PEHL…IKKH), 403–459 (VEFV…IEVV), and 464–521 (GNRI…VEDH). Asparagine 445 is a glycosylation site (N-linked (GlcNAc...) asparagine). 2 N-linked (GlcNAc...) asparagine glycosylation sites follow: asparagine 528 and asparagine 583. Transmembrane regions (helical) follow at residues 596–616 (VVWWLNLLSIALYLLSGSIIA), 643–663 (VLLGWTLHYFPFFLMGRVLYF), 665–685 (HYFPAMLFSSMLTGILWDTLL), and 700–720 (GIHVAGILSLLLGTAYSFYLF).

The protein belongs to the glycosyltransferase 39 family. As to quaternary structure, interacts with POMT1. Post-translationally, N-glycosylated. As to expression, highly expressed in testis; detected at low levels in most tissues.

It is found in the endoplasmic reticulum membrane. The enzyme catalyses a di-trans,poly-cis-dolichyl beta-D-mannosyl phosphate + L-seryl-[protein] = 3-O-(alpha-D-mannosyl)-L-seryl-[protein] + a di-trans,poly-cis-dolichyl phosphate + H(+). The catalysed reaction is a di-trans,poly-cis-dolichyl beta-D-mannosyl phosphate + L-threonyl-[protein] = 3-O-(alpha-D-mannosyl)-L-threonyl-[protein] + a di-trans,poly-cis-dolichyl phosphate + H(+). It participates in protein modification; protein glycosylation. Slightly activated by Mg(2+) and inhibited by both Ca(+) and Mn(2+). EDTA ha no effect on activity in vitro. Transfers mannosyl residues to the hydroxyl group of serine or threonine residues. Coexpression of both POMT1 and POMT2 is necessary for enzyme activity, expression of either POMT1 or POMT2 alone is insufficient. Essentially dedicated to O-mannosylation of alpha-DAG1 and few other proteins but not of cadherins and protocaherins. The chain is Protein O-mannosyl-transferase 2 (POMT2) from Homo sapiens (Human).